The sequence spans 28 residues: M-poneritoxin-Dq4a (28 aa).

Residue Ala-28 is modified to Alanine amide.

As to expression, expressed by the venom gland.

The protein resides in the secreted. The synthetic peptide has weak antimicrobial activity against Gram-negative bacterium E.coli ATCC 10536. It does not show antimicrobial activity against the Gram-positive bacteria B.amyloliquefacies S499, L.monocytogenes 2231 and S.aureus ATCC 29213, against the Gram-negative bacteria P.putida BTP1 and P.aeruginosa PaO1, or against the fungi S.cerevisiae, R.mucilaginosa, C.cucumerinum, F.oxysporum and B.cinerea. The chain is M-poneritoxin-Dq4a from Dinoponera quadriceps (South American ant).